The sequence spans 949 residues: Pyruvate, phosphate dikinase, chloroplastic (949 aa).

The N-terminal 74 residues, 1–74 (MASAFKGILI…VMAPASDPTS (74 aa)), are a transit peptide targeting the chloroplast. Thr-530 is subject to Phosphothreonine; by PDRP1. The active-site Tele-phosphohistidine intermediate is His-532. Substrate is bound by residues Arg-638, Arg-695, Glu-824, Gly-845, Thr-846, Asn-847, and Asp-848. Glu-824 is a binding site for Mg(2+). Asp-848 is a Mg(2+) binding site. Cys-910 functions as the Proton donor in the catalytic mechanism.

This sequence belongs to the PEP-utilizing enzyme family. Homodimer. Requires Mg(2+) as cofactor. Phosphorylation of Thr-530 in the dark inactivates the enzyme. Dephosphorylation upon light stimulation reactivates the enzyme.

The protein localises to the plastid. It is found in the chloroplast. The catalysed reaction is pyruvate + phosphate + ATP = phosphoenolpyruvate + AMP + diphosphate + H(+). Activated by light-induced dephosphorylation. Inhibited by dark-induced phosphorylation. Both reactions are catalyzed by PDRP1. In terms of biological role, formation of phosphoenolpyruvate, which is the primary acceptor of CO(2) in C4 and some Crassulacean acid metabolism plants. The protein is Pyruvate, phosphate dikinase, chloroplastic (PPD) of Mesembryanthemum crystallinum (Common ice plant).